Here is a 1088-residue protein sequence, read N- to C-terminus: Receptor-type guanylate cyclase gcy-17 (1088 aa).

Residues 1–20 form the signal peptide; sequence MLFLRLFIFTPFLILANCQA. Over 21 to 480 the chain is Extracellular; it reads RRTIKVGLLF…PPDFVRDYLV (460 aa). N-linked (GlcNAc...) asparagine glycans are attached at residues Asn-33, Asn-235, Asn-251, Asn-321, Asn-381, Asn-419, and Asn-434. The helical transmembrane segment at 481–501 threads the bilayer; that stretch reads IVIIIVMFLIFAVSAAVGAVF. Topologically, residues 502 to 1088 are cytoplasmic; the sequence is YAIRQKRKEI…SMARSITPEI (587 aa). Residues 529–552 are disordered; sequence SKKSKSEASQRSFASGPSTSTKLT. Positions 535–552 are enriched in polar residues; the sequence is EASQRSFASGPSTSTKLT. One can recognise a Protein kinase domain in the interval 535 to 824; it reads EASQRSFASG…KGNLMDHVFN (290 aa). Residues 826–854 adopt a coiled-coil conformation; the sequence is LETYASTLEEEVNERTKELVEEQKKSDVL. Residues 882–1012 enclose the Guanylate cyclase domain; it reads TIFFSDVVQF…DAVNTASRME (131 aa). Residues 1069–1088 form a disordered region; it reads SNMRKRENTPSMARSITPEI.

It belongs to the adenylyl cyclase class-4/guanylyl cyclase family. As to expression, expressed in PHA sensory neurons.

The protein resides in the cell membrane. It carries out the reaction GTP = 3',5'-cyclic GMP + diphosphate. Functionally, guanylate cyclase involved in the production of the second messenger cGMP. The sequence is that of Receptor-type guanylate cyclase gcy-17 from Caenorhabditis elegans.